A 519-amino-acid polypeptide reads, in one-letter code: Glycerophosphoinositol permease 1 (519 aa).

The tract at residues 1–32 (MSDLVKSSEVIETTEVPPHNNNNNKRHFKYDS) is disordered. Residues 39–59 (LAGGVKLKDALMILCAGFALI) form a helical membrane-spanning segment. Asparagine 93 carries an N-linked (GlcNAc...) asparagine glycan. A run of 3 helical transmembrane segments spans residues 94–114 (ASLV…DYIG), 117–137 (WSIV…AASH), and 141–161 (VNGM…GIGA). Asparagine 175 carries an N-linked (GlcNAc...) asparagine glycan. Transmembrane regions (helical) follow at residues 186–206 (ILAT…IFLI), 216–236 (DAIW…VFYF), 273–293 (VAWF…AGII), 313–333 (LLLG…VDIL), 337–357 (YTMM…GCGY), 363–383 (ITGL…FGPG), 404–424 (GISA…FSPI), and 432–452 (WTFI…FIFI). The segment covering 487–500 (EEEDLEGSSEDSSD) has biased composition (acidic residues). The disordered stretch occupies residues 487–519 (EEEDLEGSSEDSSDGEIVKNNTKNDVEKVDALK). N-linked (GlcNAc...) asparagine glycosylation is present at asparagine 506. Over residues 508 to 519 (TKNDVEKVDALK) the composition is skewed to basic and acidic residues.

This sequence belongs to the major facilitator superfamily. Sugar transporter (TC 2.A.1.1) family.

The protein localises to the cell membrane. It catalyses the reaction sn-glycero-3-phospho-1D-myo-inositol(out) = sn-glycero-3-phospho-1D-myo-inositol(in). In terms of biological role, glycerophosphodiester transporter that mediates uptake of glycerophosphoinositol (GroPIns) as a source of inositol and phosphate. Does not possess detectable glycerophosphocholine (GroPCho) transport activity. Although no glycerophosphoinositol transport activity occurs in the absence of GIT1, C.albicans is still able to use glycerophosphoinositol as a phosphate source at pH 7.5, albeit slowly. Thus, a second, GIT1-independent, mechanism must exist for utilizing glycerophosphoinositol as a phosphate source at physiological pH. The expanded ability to utilize GroPIns and GroPCho results from the organism's pathogenic nature and its need to occupy a variety of environments within its host organism. This possibility is buttressed by the fact that GroPIns and GroPCho are present and abundant in human fluids. This chain is Glycerophosphoinositol permease 1, found in Candida albicans (strain SC5314 / ATCC MYA-2876) (Yeast).